Here is a 69-residue protein sequence, read N- to C-terminus: Cold shock protein CapB (69 aa).

The 60-residue stretch at 7-66 (GTVKWFNDEKGFGFITPQSGDDLFVHFKAIQSDGFKSLKEGQQVSFIATRGQKGMQAEEV) folds into the CSD domain.

The protein localises to the cytoplasm. Functionally, affects cell viability at low temperatures. The sequence is that of Cold shock protein CapB (capB) from Pseudomonas fragi.